The following is a 423-amino-acid chain: Probable sucrose-phosphatase 1 (423 aa).

The protein belongs to the sucrose phosphatase family. As to quaternary structure, homodimer. It depends on Mg(2+) as a cofactor.

The catalysed reaction is sucrose 6(F)-phosphate + H2O = sucrose + phosphate. Its pathway is glycan biosynthesis; sucrose biosynthesis; sucrose from D-fructose 6-phosphate and UDP-alpha-D-glucose: step 2/2. In terms of biological role, catalyzes the final step of sucrose synthesis. The chain is Probable sucrose-phosphatase 1 (SPP1) from Arabidopsis thaliana (Mouse-ear cress).